Reading from the N-terminus, the 117-residue chain is Large ribosomal subunit protein bL20c (117 aa).

This sequence belongs to the bacterial ribosomal protein bL20 family.

Its subcellular location is the plastid. The protein localises to the chloroplast. In terms of biological role, binds directly to 23S ribosomal RNA and is necessary for the in vitro assembly process of the 50S ribosomal subunit. It is not involved in the protein synthesizing functions of that subunit. The sequence is that of Large ribosomal subunit protein bL20c from Arabis hirsuta (Hairy rock-cress).